The sequence spans 332 residues: DNA-directed RNA polymerase subunit alpha (332 aa).

Positions 1–234 (MTVTANQVLR…DQLSVFGDFT (234 aa)) are alpha N-terminal domain (alpha-NTD). The interval 248–332 (VDPVLLRPID…AGVASHGMLG (85 aa)) is alpha C-terminal domain (alpha-CTD).

The protein belongs to the RNA polymerase alpha chain family. As to quaternary structure, homodimer. The RNAP catalytic core consists of 2 alpha, 1 beta, 1 beta' and 1 omega subunit. When a sigma factor is associated with the core the holoenzyme is formed, which can initiate transcription.

The enzyme catalyses RNA(n) + a ribonucleoside 5'-triphosphate = RNA(n+1) + diphosphate. DNA-dependent RNA polymerase catalyzes the transcription of DNA into RNA using the four ribonucleoside triphosphates as substrates. The polypeptide is DNA-directed RNA polymerase subunit alpha (Stenotrophomonas maltophilia (strain R551-3)).